We begin with the raw amino-acid sequence, 156 residues long: Small ribosomal subunit protein uS7 (156 aa).

It belongs to the universal ribosomal protein uS7 family. As to quaternary structure, part of the 30S ribosomal subunit. Contacts proteins S9 and S11.

Its function is as follows. One of the primary rRNA binding proteins, it binds directly to 16S rRNA where it nucleates assembly of the head domain of the 30S subunit. Is located at the subunit interface close to the decoding center, probably blocks exit of the E-site tRNA. This chain is Small ribosomal subunit protein uS7, found in Methylocella silvestris (strain DSM 15510 / CIP 108128 / LMG 27833 / NCIMB 13906 / BL2).